Here is a 263-residue protein sequence, read N- to C-terminus: Zinc import ATP-binding protein ZnuC (263 aa).

Residues 11–226 enclose the ABC transporter domain; that stretch reads VELKNINVVF…PTFIHFFGDQ (216 aa). 43 to 50 contacts ATP; that stretch reads GPNGGGKS.

The protein belongs to the ABC transporter superfamily. Zinc importer (TC 3.A.1.15.5) family. The complex is composed of two ATP-binding proteins (ZnuC), two transmembrane proteins (ZnuB) and a solute-binding protein (ZnuA).

Its subcellular location is the cell inner membrane. It carries out the reaction Zn(2+)(out) + ATP(in) + H2O(in) = Zn(2+)(in) + ADP(in) + phosphate(in) + H(+)(in). Its function is as follows. Part of the ABC transporter complex ZnuABC involved in zinc import. Responsible for energy coupling to the transport system. The chain is Zinc import ATP-binding protein ZnuC from Pasteurella multocida (strain Pm70).